A 425-amino-acid chain; its full sequence is Xylose isomerase (425 aa).

Catalysis depends on residues H101 and D104. 7 residues coordinate Mg(2+): E232, E268, H271, D296, D307, D309, and D339.

It belongs to the xylose isomerase family. In terms of assembly, homotetramer. The cofactor is Mg(2+).

The protein resides in the cytoplasm. The enzyme catalyses alpha-D-xylose = alpha-D-xylulofuranose. The protein is Xylose isomerase of Salmonella paratyphi A (strain ATCC 9150 / SARB42).